The following is a 514-amino-acid chain: G-protein coupled receptor Mth (514 aa).

An N-terminal signal peptide occupies residues 1 to 24; it reads MKTLLVLRISTVILVVLVIQKSYA. Residues 25–218 are Extracellular-facing; it reads DILECDYFDT…CLIVPSITGQ (194 aa). Cystine bridges form between Cys29–Cys83, Cys85–Cys90, Cys94–Cys188, Cys95–Cys106, and Cys150–Cys209. N-linked (GlcNAc...) asparagine glycosylation occurs at Asn45. Residues Asn109, Asn123, Asn170, and Asn198 are each glycosylated (N-linked (GlcNAc...) asparagine). Residues 219-239 traverse the membrane as a helical segment; that stretch reads TVVMISSLICMVLTIAVYLFV. The Cytoplasmic portion of the chain corresponds to 240–248; that stretch reads KKLQNLHGK. The chain crosses the membrane as a helical span at residues 249–269; sequence CFICYMVCLFMGYLFLLLDLW. Residues 270-278 lie on the Extracellular side of the membrane; the sequence is QISISFCKP. A helical transmembrane segment spans residues 279 to 299; it reads AGFLGYFFVMAAFFWLSVISL. Over 300 to 320 the chain is Cytoplasmic; the sequence is HLWNTFRGSSHKANRFLFEHR. Residues 321-341 traverse the membrane as a helical segment; sequence FLAYNTYAWGMAVVLTGITVL. Over 342-370 the chain is Extracellular; the sequence is ADNIVENQDWNPRVGHEGHCWIYTQAWSA. A helical membrane pass occupies residues 371 to 391; the sequence is MLYFYGPMVFLIAFNITMFIL. The Cytoplasmic portion of the chain corresponds to 392–424; sequence TAKRILGVKKDIQNFAHRQERKQKLNSDKQTYT. A helical membrane pass occupies residues 425-445; it reads FFLRLFIIMGLSWSLEIGSYF. Topologically, residues 446 to 454 are extracellular; the sequence is SQSNQTWAN. A glycan (N-linked (GlcNAc...) asparagine) is linked at Asn449. A helical membrane pass occupies residues 455–475; that stretch reads VFLVADYLNWSQGIIIFILFV. The Cytoplasmic portion of the chain corresponds to 476-514; it reads LKRSTWRLLQESIRGEGEEVNNSEEEISLENTTTRNVLL.

This sequence belongs to the G-protein coupled receptor 2 family. Mth subfamily. In terms of assembly, homodimer.

It is found in the cell membrane. Its function is as follows. Involved in biological aging and stress response. Essential for adult survival. Required in the presynaptic motor neuron to up-regulate neurotransmitter exocytosis at larval glutamatergic neuromuscular junctions (NMJs). Regulates a step associated with docking and clustering of vesicles at release sites. SP/Acp70A and sun are agonists that activate mth in vitro. This is G-protein coupled receptor Mth (mth) from Drosophila melanogaster (Fruit fly).